The following is a 467-amino-acid chain: Light-independent protochlorophyllide reductase subunit N (467 aa).

[4Fe-4S] cluster is bound by residues cysteine 23, cysteine 48, and cysteine 108.

The protein belongs to the BchN/ChlN family. Protochlorophyllide reductase is composed of three subunits; ChlL, ChlN and ChlB. Forms a heterotetramer of two ChlB and two ChlN subunits. [4Fe-4S] cluster is required as a cofactor.

The enzyme catalyses chlorophyllide a + oxidized 2[4Fe-4S]-[ferredoxin] + 2 ADP + 2 phosphate = protochlorophyllide a + reduced 2[4Fe-4S]-[ferredoxin] + 2 ATP + 2 H2O. Its pathway is porphyrin-containing compound metabolism; chlorophyll biosynthesis (light-independent). In terms of biological role, component of the dark-operative protochlorophyllide reductase (DPOR) that uses Mg-ATP and reduced ferredoxin to reduce ring D of protochlorophyllide (Pchlide) to form chlorophyllide a (Chlide). This reaction is light-independent. The NB-protein (ChlN-ChlB) is the catalytic component of the complex. This Trichormus variabilis (strain ATCC 29413 / PCC 7937) (Anabaena variabilis) protein is Light-independent protochlorophyllide reductase subunit N.